We begin with the raw amino-acid sequence, 542 residues long: Monocarboxylate transporter 3 (542 aa).

Over 1-19 the chain is Cytoplasmic; that stretch reads MGRADPEEGQLPAPVKPPD. Residues 20–40 form a helical membrane-spanning segment; that stretch reads GGWGWIVLFGCFVITGFSYAF. Topologically, residues 41 to 63 are extracellular; sequence PKAVSVYFKELMKDFHVGYSDTA. A helical membrane pass occupies residues 64 to 84; that stretch reads WISSIMLAMLYGTGPVCSIMV. The Cytoplasmic portion of the chain corresponds to 85–93; that stretch reads NQFGCRPVM. A helical membrane pass occupies residues 94–114; sequence LIGGLLASSGMILASFTTNII. Residues 115-119 lie on the Extracellular side of the membrane; sequence ELYLT. Residues 120–140 form a helical membrane-spanning segment; the sequence is AGVLTGLGMALNFQPSLIMLG. At 141–152 the chain is on the cytoplasmic side; that stretch reads TYFDKRRPLANG. The helical transmembrane segment at 153-173 threads the bilayer; the sequence is LAAAGSPVFLSSLSPLGQVLL. The Extracellular segment spans residues 174–181; that stretch reads EKFGWRGG. Residues 182 to 202 traverse the membrane as a helical segment; that stretch reads FLIMGGLLLNCCTCGAVMRPL. Over 203-265 the chain is Cytoplasmic; that stretch reads DAGMKRKTEK…LDFSIFSNRG (63 aa). Residues 226-247 form a disordered region; the sequence is GGKSEEGISTTDGTKKTKKAKK. A helical transmembrane segment spans residues 266 to 286; the sequence is FIIYTISKFILVLGLFVPPIL. Residues 287–301 lie on the Extracellular side of the membrane; sequence LVNYAKDTGVPDTEA. A helical transmembrane segment spans residues 302–322; the sequence is AFLLSIIGFIDIFARPACGMV. Over 323-330 the chain is Cytoplasmic; that stretch reads AGLKWVRP. The chain crosses the membrane as a helical span at residues 331-351; sequence HVAYLFSFAMLFNGLTDICSA. Residues 352-357 are Extracellular-facing; the sequence is RASNYT. The helical transmembrane segment at 358–378 threads the bilayer; sequence GLVIFCVFFGISYGMVGALQF. Topologically, residues 379-392 are cytoplasmic; that stretch reads EVLMAIVGSQKFSS. A helical transmembrane segment spans residues 393–413; the sequence is AIGLVLLIEAFAVLIGPPSAG. The Extracellular portion of the chain corresponds to 414-423; sequence RLVDALKNYE. A helical membrane pass occupies residues 424–444; the sequence is VIFYLAGSEVVLSALFLAMAT. Over 445–542 the chain is Cytoplasmic; the sequence is YCCLNRGKKT…ADQTVERDSF (98 aa). A disordered region spans residues 453 to 542; that stretch reads KTPPPEKNPS…ADQTVERDSF (90 aa). 2 basolateral sorting signal regions span residues 465-510 and 511-532; these read GGSD…VEDE and QSGE…AGCN. The span at 468–478 shows a compositional bias: acidic residues; that stretch reads DTEEAESDVQE.

It belongs to the major facilitator superfamily. Monocarboxylate porter (TC 2.A.1.13) family. In terms of tissue distribution, retinal pigment epithelium.

The protein resides in the basolateral cell membrane. The enzyme catalyses (S)-lactate(in) + H(+)(in) = (S)-lactate(out) + H(+)(out). Probable retinal pigment epithelium (RPE)-specific proton-coupled L-lactate transporter. May facilitate transport of lactate and H(+) out of the retina and could therefore play a role in pH and ion homeostasis of the outer retina. The polypeptide is Monocarboxylate transporter 3 (SLC16A8) (Gallus gallus (Chicken)).